A 154-amino-acid polypeptide reads, in one-letter code: 17.7 kDa class I heat shock protein (154 aa).

The region spanning 40 to 154 (ETSAFANTRI…PDVKSIEISG (115 aa)) is the sHSP domain.

It belongs to the small heat shock protein (HSP20) family. As to quaternary structure, forms oligomeric structures.

It localises to the cytoplasm. The polypeptide is 17.7 kDa class I heat shock protein (Solanum peruvianum (Peruvian tomato)).